Here is a 278-residue protein sequence, read N- to C-terminus: Putative cuticle collagen 91 (278 aa).

Disordered regions lie at residues 84-109 (LAKN…GVDG) and 140-278 (GPAG…SVRQ). A compositionally biased stretch (pro residues) spans 89-98 (PPGPPGPPGA). Triple-helical region regions lie at residues 91–120 (GPPG…DGVA), 137–199 (GEAG…NGQR), and 202–264 (GTPG…PGPD). Residues 99–109 (PGAAGEPGVDG) show a composition bias toward low complexity. A compositionally biased stretch (gly residues) spans 158-167 (GADGQGGAPG). 2 stretches are compositionally biased toward low complexity: residues 172–228 (EGPA…AGAP) and 236–245 (APGVDGQPGA).

The protein belongs to the cuticular collagen family. In terms of assembly, collagen polypeptide chains are complexed within the cuticle by disulfide bonds and other types of covalent cross-links.

Functionally, nematode cuticles are composed largely of collagen-like proteins. The cuticle functions both as an exoskeleton and as a barrier to protect the worm from its environment. This is Putative cuticle collagen 91 (col-91) from Caenorhabditis elegans.